Reading from the N-terminus, the 337-residue chain is UDP-3-O-acylglucosamine N-acyltransferase (337 aa).

Catalysis depends on His-238, which acts as the Proton acceptor.

The protein belongs to the transferase hexapeptide repeat family. LpxD subfamily. In terms of assembly, homotrimer.

The catalysed reaction is a UDP-3-O-[(3R)-3-hydroxyacyl]-alpha-D-glucosamine + a (3R)-hydroxyacyl-[ACP] = a UDP-2-N,3-O-bis[(3R)-3-hydroxyacyl]-alpha-D-glucosamine + holo-[ACP] + H(+). It participates in bacterial outer membrane biogenesis; LPS lipid A biosynthesis. Functionally, catalyzes the N-acylation of UDP-3-O-acylglucosamine using 3-hydroxyacyl-ACP as the acyl donor. Is involved in the biosynthesis of lipid A, a phosphorylated glycolipid that anchors the lipopolysaccharide to the outer membrane of the cell. This is UDP-3-O-acylglucosamine N-acyltransferase from Xanthomonas axonopodis pv. citri (strain 306).